The following is a 203-amino-acid chain: Cytochrome c oxidase assembly protein CtaG (203 aa).

Over 1 to 16 (MADQQEKDQKLKKQQR) the chain is Cytoplasmic. A helical; Signal-anchor for type II membrane protein membrane pass occupies residues 17-39 (SNATIAFACLSFFVCMIGAAYAS). Residues 40-203 (VPLYRIFCQV…VKAETPTNGS (164 aa)) lie on the Periplasmic side of the membrane.

Belongs to the COX11/CtaG family.

The protein resides in the cell inner membrane. Exerts its effect at some terminal stage of cytochrome c oxidase synthesis, probably by being involved in the insertion of the copper B into subunit I. The polypeptide is Cytochrome c oxidase assembly protein CtaG (Brucella anthropi (strain ATCC 49188 / DSM 6882 / CCUG 24695 / JCM 21032 / LMG 3331 / NBRC 15819 / NCTC 12168 / Alc 37) (Ochrobactrum anthropi)).